Here is a 361-residue protein sequence, read N- to C-terminus: Beta-hexosaminidase (361 aa).

Substrate is bound by residues Asp69, Arg77, Arg144, and 174 to 175; that span reads KH. His187 functions as the Proton donor/acceptor in the catalytic mechanism. Asp258 functions as the Nucleophile in the catalytic mechanism.

Belongs to the glycosyl hydrolase 3 family. NagZ subfamily.

The protein localises to the cytoplasm. It carries out the reaction Hydrolysis of terminal non-reducing N-acetyl-D-hexosamine residues in N-acetyl-beta-D-hexosaminides.. It functions in the pathway cell wall biogenesis; peptidoglycan recycling. Plays a role in peptidoglycan recycling by cleaving the terminal beta-1,4-linked N-acetylglucosamine (GlcNAc) from peptide-linked peptidoglycan fragments, giving rise to free GlcNAc, anhydro-N-acetylmuramic acid and anhydro-N-acetylmuramic acid-linked peptides. The chain is Beta-hexosaminidase from Neisseria meningitidis serogroup A / serotype 4A (strain DSM 15465 / Z2491).